A 49-amino-acid chain; its full sequence is Astexin-3 (49 aa).

The propeptide occupies 1–25 (MRTYNRSLPARAGLTDLGKVTTHTK). Residues 26 to 34 (GPTPMVGLD) constitute a cross-link (isoaspartyl glycine isopeptide (Gly-Asp)).

In terms of processing, this lasso peptide is hydrolyzed to a linear form by the isopeptidase AtxE2, in vitro. The isopeptidase AtxE2 only recognizes the threaded form (but not the unthreaded form).

The protein localises to the cytoplasm. It is found in the secreted. Its function is as follows. Shows weak antimicrobial activity against its phylogenetic relative Caulobacter crescentus. Does not show activity against other bacteria tested (E.coli, Vibrio sp, Burkhoderia thailandensis, and Salmonella newport). The sequence is that of Astexin-3 from Asticcacaulis excentricus (strain ATCC 15261 / DSM 4724 / KCTC 12464 / NCIMB 9791 / VKM B-1370 / CB 48).